The sequence spans 293 residues: uncharacterized protein (293 aa).

Aspartate 119 is an active-site residue.

This sequence belongs to the pseudouridine synthase RluA family.

The enzyme catalyses a uridine in RNA = a pseudouridine in RNA. This is an uncharacterized protein from Helicobacter pylori (strain J99 / ATCC 700824) (Campylobacter pylori J99).